Here is a 283-residue protein sequence, read N- to C-terminus: Polyamine aminopropyltransferase (283 aa).

Residues 5–238 enclose the PABS domain; sequence TTWIDEYHKG…GIWSWTFASS (234 aa). Gln-32 provides a ligand contact to S-methyl-5'-thioadenosine. 2 residues coordinate spermidine: His-63 and Asp-87. S-methyl-5'-thioadenosine is bound by residues Glu-107 and 139-140; that span reads DG. The active-site Proton acceptor is Asp-158. A spermidine-binding site is contributed by 158–161; the sequence is DCSD.

The protein belongs to the spermidine/spermine synthase family. Homodimer or homotetramer.

It localises to the cytoplasm. The catalysed reaction is S-adenosyl 3-(methylsulfanyl)propylamine + putrescine = S-methyl-5'-thioadenosine + spermidine + H(+). It participates in amine and polyamine biosynthesis; spermidine biosynthesis; spermidine from putrescine: step 1/1. Its function is as follows. Catalyzes the irreversible transfer of a propylamine group from the amino donor S-adenosylmethioninamine (decarboxy-AdoMet) to putrescine (1,4-diaminobutane) to yield spermidine. In Prochlorococcus marinus (strain AS9601), this protein is Polyamine aminopropyltransferase.